Consider the following 115-residue polypeptide: NADH-ubiquinone oxidoreductase chain 3 (115 aa).

3 consecutive transmembrane segments (helical) span residues 3-23 (FVLILMTNTLLALLLMIITFW), 55-75 (FFLVAITFLLFDLEIALLLPL), and 84-104 (LPLMVTSSLLLITILALSLAY).

This sequence belongs to the complex I subunit 3 family. In terms of assembly, core subunit of respiratory chain NADH dehydrogenase (Complex I) which is composed of 45 different subunits. Interacts with TMEM186. Interacts with TMEM242.

Its subcellular location is the mitochondrion inner membrane. The catalysed reaction is a ubiquinone + NADH + 5 H(+)(in) = a ubiquinol + NAD(+) + 4 H(+)(out). In terms of biological role, core subunit of the mitochondrial membrane respiratory chain NADH dehydrogenase (Complex I) which catalyzes electron transfer from NADH through the respiratory chain, using ubiquinone as an electron acceptor. Essential for the catalytic activity of complex I. This is NADH-ubiquinone oxidoreductase chain 3 from Pan troglodytes (Chimpanzee).